The sequence spans 249 residues: Homeobox protein TGIF2LX (249 aa).

The segment covering 1–27 (MEAAADRPAETRSRVEKDSRRAKKDSP) has biased composition (basic and acidic residues). Disordered stretches follow at residues 1–60 (MEAA…KKKR) and 121–215 (QRRG…EPVS). The segment covering 28 to 46 (AKTQSPAQDTSIMLRSNAD) has biased composition (polar residues). Positions 55–118 (EHKKKRKGYL…INARRRILPD (64 aa)) form a DNA-binding region, homeobox; TALE-type. Polar residues predominate over residues 159–172 (DNVQSLPLRSSPKG). The span at 202 to 215 (VSNITSSSSPEPVS) shows a compositional bias: low complexity.

This sequence belongs to the TALE/TGIF homeobox family.

It is found in the nucleus. Its function is as follows. May have a transcription role in testis. This is Homeobox protein TGIF2LX (TGIF2LX) from Miopithecus talapoin (Angolan talapoin).